A 148-amino-acid polypeptide reads, in one-letter code: Deoxyuridine 5'-triphosphate nucleotidohydrolase (148 aa).

Substrate contacts are provided by residues 67 to 69 (RSG), Asn-80, 84 to 86 (LID), and Met-94.

It belongs to the dUTPase family. It depends on Mg(2+) as a cofactor.

It carries out the reaction dUTP + H2O = dUMP + diphosphate + H(+). It participates in pyrimidine metabolism; dUMP biosynthesis; dUMP from dCTP (dUTP route): step 2/2. Its function is as follows. This enzyme is involved in nucleotide metabolism: it produces dUMP, the immediate precursor of thymidine nucleotides and it decreases the intracellular concentration of dUTP so that uracil cannot be incorporated into DNA. The sequence is that of Deoxyuridine 5'-triphosphate nucleotidohydrolase from Burkholderia mallei (strain NCTC 10247).